We begin with the raw amino-acid sequence, 610 residues long: MAQEIDLSALKELEREAILQVLYRDQAVQNTEEERTRKLKTHLQHLRWKGAKNTDWEHKEKCCARCQQVLGFLLHRGAVCRGCSHRVCAQCRVFLRGTHAWKCTVCFEDRNVKIKTGEWFYEERAKKFPTGGKHETVGGQLLQSYQKLSKISVVPPTPPPVSESQCSRSPGRLQEFGQFRGFNKSVENLFLSLATHVKKLSKSQNDMTSEKHLLATGPRQCVGQTERRSQSDTAVNVTTRKVSAPDILKPLNQEDPKCSTNPILKQQNLPSSPAPSTIFSGGFRHGSLISIDSTCTEMGNFDNANVTGEIEFAIHYCFKTHSLEICIKACKNLAYGEEKKKKCNPYVKTYLLPDRSSQGKRKTGVQRNTVDPTFQETLKYQVAPAQLVTRQLQVSVWHLGTLARRVFLGEVIIPLATWDFEDSTTQSFRWHPLRAKAEKYEDSVPQSNGELTVRAKLVLPSRPRKLQEAQEGTDQPSLHGQLCLVVLGAKNLPVRPDGTLNSFVKGCLTLPDQQKLRLKSPVLRKQACPQWKHSFVFSGVTPAQLRQSSLELTVWDQALFGMNDRLLGGTRLGSKGDTAVGGDACSLSKLQWQKVLSSPNLWTDMTLVLH.

The 120-residue stretch at 4–123 (EIDLSALKEL…IKTGEWFYEE (120 aa)) folds into the RabBD domain. A disordered region spans residues 219-239 (RQCVGQTERRSQSDTAVNVTT). 2 consecutive C2 domains span residues 306–428 (VTGE…TQSF) and 462–603 (RPRK…NLWT).

Monomer. Binds NRXN1. Binds RAB27A that has been activated by GTP-binding via its N-terminus.

Its subcellular location is the endomembrane system. Its function is as follows. May act as Rab effector protein and play a role in vesicle trafficking. Binds phospholipids in the presence of calcium ions. The protein is Synaptotagmin-like protein 3 (SYTL3) of Homo sapiens (Human).